The primary structure comprises 47 residues: Ruminococcin-A (47 aa).

A signal peptide spans 1-23 (MRNDVLTLTNPMEEKELEQILGG). Residues T30 and T39 each carry the 2,3-didehydrobutyrine modification. The beta-methyllanthionine (Thr-Cys) cross-link spans 30–35 (TISHEC). The lanthionine (Ser-Cys) cross-link spans 32–46 (SHECNMNTWQFLFTC). The segment at residues 45-47 (TCC) is a cross-link (beta-methyllanthionine (Thr-Cys)).

Post-translationally, maturation of lantibiotics involves the enzymatic conversion of Thr, and Ser into dehydrated AA and the formation of thioether bonds with cysteine. This is followed by membrane translocation and cleavage of the modified precursor. In terms of processing, it is not established whether the 2,3-didehydrobutyrine is the E- or Z-isomer.

Its subcellular location is the secreted. Functionally, lanthionine-containing peptide antibiotic (lantibiotic) active on Gram-positive bacteria. The bactericidal activity of lantibiotics is based on depolarization of energized bacterial cytoplasmic membranes, initiated by the formation of aqueous transmembrane pores. Ruminococcin A is a broad spectrum bacteriocin exhibiting activity against a wide range of pathogenic clostridia and B.longum. The protein is Ruminococcin-A (rumA1) of Mediterraneibacter gnavus (Ruminococcus gnavus).